A 533-amino-acid polypeptide reads, in one-letter code: Suppressor of cytokine signaling 6 (533 aa).

Disordered regions lie at residues 54 to 136 (CDIG…WPLR) and 177 to 199 (ELRDLQPEPRPESRCSPSSPGDL). Over residues 59–69 (EDEKGKNRSKS) the composition is skewed to basic and acidic residues. The segment covering 76-88 (LKRRLSAKQKTKG) has biased composition (basic residues). Positions 177–189 (ELRDLQPEPRPES) are enriched in basic and acidic residues. Positions 382 to 489 (WYWGPITRWE…TYPVRLTNPV (108 aa)) constitute an SH2 domain. The region spanning 484–533 (RLTNPVSRFMQVRSLQYLCRFVIRQYTRIDLIQKLPLPNKMKDYLQEKHY) is the SOCS box domain.

In terms of assembly, interacts with KIT (phosphorylated). Interacts with RBCK1. Interacts with phosphorylated IRS4. Interacts with PIM3.

Its pathway is protein modification; protein ubiquitination. Its function is as follows. SOCS family proteins form part of a classical negative feedback system that regulates cytokine signal transduction. May be a substrate recognition component of a SCF-like ECS (Elongin BC-CUL2/5-SOCS-box protein) E3 ubiquitin-protein ligase complex which mediates the ubiquitination and subsequent proteasomal degradation of target proteins. Regulates KIT degradation by ubiquitination of the tyrosine-phosphorylated receptor. The chain is Suppressor of cytokine signaling 6 (Socs6) from Mus musculus (Mouse).